Reading from the N-terminus, the 132-residue chain is D-beta-hydroxybutyrate dehydrogenase, mitochondrial (132 aa).

3–27 serves as a coordination point for NAD(+); it reads LVTGCDSGFGFSLAKHLHSKGFLVF. At Lys-17 the chain carries N6-acetyllysine. Ser-59 serves as a coordination point for substrate. The active-site Proton acceptor is Tyr-66. An N6-acetyllysine modification is found at Lys-70. A glycan (O-linked (GlcNAc) serine) is linked at Ser-77. Ser-104 is subject to Phosphoserine.

Belongs to the short-chain dehydrogenases/reductases (SDR) family. As to quaternary structure, homotetramer.

Its subcellular location is the mitochondrion inner membrane. It is found in the mitochondrion matrix. The catalysed reaction is (R)-3-hydroxybutanoate + NAD(+) = acetoacetate + NADH + H(+). Requires phosphatidylcholine as an allosteric activator for enzymatic activity. This chain is D-beta-hydroxybutyrate dehydrogenase, mitochondrial, found in Mesocricetus auratus (Golden hamster).